The chain runs to 422 residues: Lipoyl synthase, mitochondrial (422 aa).

Residues 1–34 (MAASSTRLRCLYASSAPAWKKSPSQSIISLSRHY) constitute a mitochondrion transit peptide. Over residues 37–48 (TSSTTPSLNPDE) the composition is skewed to polar residues. Positions 37–70 (TSSTTPSLNPDESSSSSSSTIPKRRKTTTFRDKL) are disordered. 7 residues coordinate [4Fe-4S] cluster: Cys146, Cys151, Cys157, Cys177, Cys181, Cys184, and Ser383. Residues 160 to 372 (GSDKSAATAT…RQRALEMGFL (213 aa)) enclose the Radical SAM core domain.

This sequence belongs to the radical SAM superfamily. Lipoyl synthase family. [4Fe-4S] cluster serves as cofactor.

The protein resides in the mitochondrion. It carries out the reaction [[Fe-S] cluster scaffold protein carrying a second [4Fe-4S](2+) cluster] + N(6)-octanoyl-L-lysyl-[protein] + 2 oxidized [2Fe-2S]-[ferredoxin] + 2 S-adenosyl-L-methionine + 4 H(+) = [[Fe-S] cluster scaffold protein] + N(6)-[(R)-dihydrolipoyl]-L-lysyl-[protein] + 4 Fe(3+) + 2 hydrogen sulfide + 2 5'-deoxyadenosine + 2 L-methionine + 2 reduced [2Fe-2S]-[ferredoxin]. It functions in the pathway protein modification; protein lipoylation via endogenous pathway; protein N(6)-(lipoyl)lysine from octanoyl-[acyl-carrier-protein]: step 2/2. Catalyzes the radical-mediated insertion of two sulfur atoms into the C-6 and C-8 positions of the octanoyl moiety bound to the lipoyl domains of lipoate-dependent enzymes, thereby converting the octanoylated domains into lipoylated derivatives. The sequence is that of Lipoyl synthase, mitochondrial from Talaromyces stipitatus (strain ATCC 10500 / CBS 375.48 / QM 6759 / NRRL 1006) (Penicillium stipitatum).